The primary structure comprises 386 residues: Ovalbumin (386 aa).

Glycine 2 bears the N-acetylglycine mark. The segment at residues 22 to 48 (HHANENIFYCPIAIMSALAMVYLGAKD) is a signal peptide (not cleaved). A Phosphoserine modification is found at serine 69. A disulfide bridge connects residues cysteine 74 and cysteine 121. Residue glutamate 192 coordinates Ca(2+). N-linked (GlcNAc...) asparagine glycosylation occurs at asparagine 293. Serine 345 carries the phosphoserine modification.

Belongs to the serpin family. Ov-serpin subfamily. Homodimer. Undergoes proteolytic cleavage first at the canonical P1-P1' site, and then at the P8-P7 site by subtilisin. In terms of tissue distribution, major protein of egg white. Expressed in the magnum of the oviduct (at protein level).

The protein resides in the secreted. Functionally, non-inhibitory serpin. Storage protein of egg white. The sequence is that of Ovalbumin (SERPINB14) from Gallus gallus (Chicken).